Reading from the N-terminus, the 32-residue chain is Phallacidin proprotein (32 aa).

Positions 1–10 (MSDINATRLP) are excised as a propeptide. Positions 11 to 17 (AWLVDCP) form a cross-link, cyclopeptide (Ala-Pro). Positions 12–16 (WLVDC) form a cross-link, 2'-cysteinyl-6'-hydroxytryptophan sulfoxide (Trp-Cys). The propeptide occupies 18 to 32 (CVGDDINRLLTRGEK).

It belongs to the MSDIN fungal toxin family. Post-translationally, processed by the macrocyclase-peptidase enzyme POPB to yield a toxic cyclic heptapeptide. POPB first removes 10 residues from the N-terminus. Conformational trapping of the remaining peptide forces the enzyme to release this intermediate rather than proceed to macrocyclization. The enzyme rebinds the remaining peptide in a different conformation and catalyzes macrocyclization of the N-terminal 7 residues.

Major toxin that belongs to the bicyclic heptapeptides called phallotoxins. Although structurally related to amatoxins, phallotoxins have a different mode of action, which is the stabilization of F-actin. Phallotoxins are poisonous when administered parenterally, but not orally because of poor absorption. This Amanita pallidorosea protein is Phallacidin proprotein.